A 309-amino-acid chain; its full sequence is Homoserine O-succinyltransferase (309 aa).

Catalysis depends on C142, which acts as the Acyl-thioester intermediate. Positions 163 and 192 each coordinate substrate. Residue H235 is the Proton acceptor of the active site. E237 is an active-site residue. R249 contacts substrate.

It belongs to the MetA family.

It is found in the cytoplasm. It catalyses the reaction L-homoserine + succinyl-CoA = O-succinyl-L-homoserine + CoA. The protein operates within amino-acid biosynthesis; L-methionine biosynthesis via de novo pathway; O-succinyl-L-homoserine from L-homoserine: step 1/1. Its function is as follows. Transfers a succinyl group from succinyl-CoA to L-homoserine, forming succinyl-L-homoserine. The chain is Homoserine O-succinyltransferase from Enterobacter sp. (strain 638).